The sequence spans 101 residues: uncharacterized protein (101 aa).

This is an uncharacterized protein from Gracula (BFDV).